We begin with the raw amino-acid sequence, 1139 residues long: DNA-directed RNA polymerase subunit beta (1139 aa).

The interval 1085–1139 is disordered; that stretch reads ADTSNRHTPSRPTYESVTSEDLSPSPAFTRVLRTADANASRSLEEDEDEEEEEDF. The segment covering 1086–1106 has biased composition (polar residues); sequence DTSNRHTPSRPTYESVTSEDL. Residues 1128–1139 show a composition bias toward acidic residues; the sequence is EEDEDEEEEEDF.

The protein belongs to the RNA polymerase beta chain family. In terms of assembly, in cyanobacteria the RNAP catalytic core is composed of 2 alpha, 1 beta, 1 beta', 1 gamma and 1 omega subunit. When a sigma factor is associated with the core the holoenzyme is formed, which can initiate transcription.

It catalyses the reaction RNA(n) + a ribonucleoside 5'-triphosphate = RNA(n+1) + diphosphate. Functionally, DNA-dependent RNA polymerase catalyzes the transcription of DNA into RNA using the four ribonucleoside triphosphates as substrates. The polypeptide is DNA-directed RNA polymerase subunit beta (Synechococcus sp. (strain JA-2-3B'a(2-13)) (Cyanobacteria bacterium Yellowstone B-Prime)).